We begin with the raw amino-acid sequence, 482 residues long: 3-isopropylmalate dehydratase large subunit (482 aa).

The [4Fe-4S] cluster site is built by C353, C414, and C417.

The protein belongs to the aconitase/IPM isomerase family. LeuC type 1 subfamily. As to quaternary structure, heterodimer of LeuC and LeuD. [4Fe-4S] cluster serves as cofactor.

The enzyme catalyses (2R,3S)-3-isopropylmalate = (2S)-2-isopropylmalate. It participates in amino-acid biosynthesis; L-leucine biosynthesis; L-leucine from 3-methyl-2-oxobutanoate: step 2/4. Its function is as follows. Catalyzes the isomerization between 2-isopropylmalate and 3-isopropylmalate, via the formation of 2-isopropylmaleate. In Xanthomonas oryzae pv. oryzae (strain MAFF 311018), this protein is 3-isopropylmalate dehydratase large subunit.